We begin with the raw amino-acid sequence, 357 residues long: MQNDIHRHLNPALQKIGAYVVEGGQEAPVKLNQNESPFDVPMWLKEAITREFVREPWNRYPDILPYRGIEAYAEFLGVPAGRVIMGNGSNELLYTIFMACLGPGRRILIPEPSFSLYEKIALLMQADIVSVPMRRGLDFDADLILERAKAEAVDLIVLSTPNNPTGKSLSPDDIRRIATESGAIVLVDEAYIEFSRHPSALPLVDELPNVVILRTMSKALALAGMRIGFAIAPEALMAELTKPKIPFASNRLAEITLRHVLANYSIVKDSVSYILDERERMYSELEGMDGLQPFMSDTNFLIIRVADPRAVFQHLRGEGILVRNVSGYPLMEGCLRCNIGLRDENRRLLDGLSRALR.

At Lys-218 the chain carries N6-(pyridoxal phosphate)lysine.

This sequence belongs to the class-II pyridoxal-phosphate-dependent aminotransferase family. Histidinol-phosphate aminotransferase subfamily. Homodimer. Requires pyridoxal 5'-phosphate as cofactor.

The catalysed reaction is L-histidinol phosphate + 2-oxoglutarate = 3-(imidazol-4-yl)-2-oxopropyl phosphate + L-glutamate. The protein operates within amino-acid biosynthesis; L-histidine biosynthesis; L-histidine from 5-phospho-alpha-D-ribose 1-diphosphate: step 7/9. The polypeptide is Histidinol-phosphate aminotransferase (Chlorobium luteolum (strain DSM 273 / BCRC 81028 / 2530) (Pelodictyon luteolum)).